Reading from the N-terminus, the 364-residue chain is DNA replication and repair protein RecF (364 aa).

30–37 is an ATP binding site; sequence GNNAQGKT.

It belongs to the RecF family.

Its subcellular location is the cytoplasm. Functionally, the RecF protein is involved in DNA metabolism; it is required for DNA replication and normal SOS inducibility. RecF binds preferentially to single-stranded, linear DNA. It also seems to bind ATP. This Clostridium botulinum (strain ATCC 19397 / Type A) protein is DNA replication and repair protein RecF.